The chain runs to 251 residues: Imidazole glycerol phosphate synthase subunit HisF (251 aa).

Active-site residues include Asp-11 and Asp-130.

This sequence belongs to the HisA/HisF family. Heterodimer of HisH and HisF.

The protein resides in the cytoplasm. It carries out the reaction 5-[(5-phospho-1-deoxy-D-ribulos-1-ylimino)methylamino]-1-(5-phospho-beta-D-ribosyl)imidazole-4-carboxamide + L-glutamine = D-erythro-1-(imidazol-4-yl)glycerol 3-phosphate + 5-amino-1-(5-phospho-beta-D-ribosyl)imidazole-4-carboxamide + L-glutamate + H(+). It functions in the pathway amino-acid biosynthesis; L-histidine biosynthesis; L-histidine from 5-phospho-alpha-D-ribose 1-diphosphate: step 5/9. Its function is as follows. IGPS catalyzes the conversion of PRFAR and glutamine to IGP, AICAR and glutamate. The HisF subunit catalyzes the cyclization activity that produces IGP and AICAR from PRFAR using the ammonia provided by the HisH subunit. The protein is Imidazole glycerol phosphate synthase subunit HisF of Cytophaga hutchinsonii (strain ATCC 33406 / DSM 1761 / CIP 103989 / NBRC 15051 / NCIMB 9469 / D465).